The chain runs to 203 residues: MKIGILGGTFDPIHYGHLWFAEYAREKFKLDKVFFIPNRVPSHREIPIATSKQRYEMVLLATLNNPYFEVLPIELEREGVSYMVDTIRDLSTYFSNAELYLLLGNDAFRDFLKWKDPYKIVEKVSIIVGSRGEEYYTNDLKDFIKTFENKIFFLDFPYYPISAKEIRDRVKKGLSIKYLVPENVEEYIIKNSVYCEEDQKDVK.

It belongs to the NadD family.

It carries out the reaction nicotinate beta-D-ribonucleotide + ATP + H(+) = deamido-NAD(+) + diphosphate. The protein operates within cofactor biosynthesis; NAD(+) biosynthesis; deamido-NAD(+) from nicotinate D-ribonucleotide: step 1/1. Catalyzes the reversible adenylation of nicotinate mononucleotide (NaMN) to nicotinic acid adenine dinucleotide (NaAD). The polypeptide is Probable nicotinate-nucleotide adenylyltransferase (Dictyoglomus turgidum (strain DSM 6724 / Z-1310)).